Here is a 290-residue protein sequence, read N- to C-terminus: 4-hydroxy-tetrahydrodipicolinate synthase (290 aa).

Residue Thr-44 coordinates pyruvate. The active-site Proton donor/acceptor is Tyr-132. Lys-160 serves as the catalytic Schiff-base intermediate with substrate. Ile-202 contacts pyruvate.

Belongs to the DapA family. Homotetramer; dimer of dimers.

It localises to the cytoplasm. The catalysed reaction is L-aspartate 4-semialdehyde + pyruvate = (2S,4S)-4-hydroxy-2,3,4,5-tetrahydrodipicolinate + H2O + H(+). The protein operates within amino-acid biosynthesis; L-lysine biosynthesis via DAP pathway; (S)-tetrahydrodipicolinate from L-aspartate: step 3/4. Its function is as follows. Catalyzes the condensation of (S)-aspartate-beta-semialdehyde [(S)-ASA] and pyruvate to 4-hydroxy-tetrahydrodipicolinate (HTPA). The chain is 4-hydroxy-tetrahydrodipicolinate synthase from Pelobacter propionicus (strain DSM 2379 / NBRC 103807 / OttBd1).